The following is a 192-amino-acid chain: Protein MTH_857 (192 aa).

The region spanning 9–192 (DEGRTLVKIA…FQAQIFHEDG (184 aa)) is the AMMECR1 domain.

This is Protein MTH_857 from Methanothermobacter thermautotrophicus (strain ATCC 29096 / DSM 1053 / JCM 10044 / NBRC 100330 / Delta H) (Methanobacterium thermoautotrophicum).